The chain runs to 274 residues: Large ribosomal subunit protein uL2cz/uL2cy (274 aa).

Residues 225 to 274 (NPVDHPHGGGEGRAPIGRKKPTTPWGYPALGRRSRKRKKYSDSFILRRRK) form a disordered region.

This sequence belongs to the universal ribosomal protein uL2 family. Part of the 50S ribosomal subunit.

It is found in the plastid. It localises to the chloroplast. In Dioscorea elephantipes (Elephant's foot yam), this protein is Large ribosomal subunit protein uL2cz/uL2cy (rpl2-A).